Here is a 1230-residue protein sequence, read N- to C-terminus: MASASYHISNLLEKMTSSGKDFRFMATNDLMTELQKDSIKLDDDSERKVVKMILKLQEDKNGEVQNLAVKCLGPLVSKVKEYQVETIVDTLCTNMLSDKEQLRDISSIGLKTVIGELPPASSGSALAANVCKKITGRLTSAIAKQEDVSVQLEALDIMADMLSRQGGLLVNFHPSILTCLLPQLTSPRLAVRKRTIIALGHLVMSCGNIVFVGLIEHLLSELSKNDSMSTTRTYIQCIAAISRQAGHRIGEYLEKIIPLVVKFCNVDDDELREYCIQAFESFVRRCPKEVYPHVSTIINICLKYLTYDPNYNYDDEDEDENAMDADGGDDDDQGSDDEYSDDGDMSWKVRRAAAKCLDAVVSTRHEMLPEFYKTVSPALISRFKEREENVKADVFHAYLSLLKQTRPVQSWLCDPDAMEQGETPLTMLQSQVPNIVKALHKQMKEKSVKTRQCCFNMLTELVNVLPGALTQHIPVLVPGIIFSLNDESSSSNLKIDALSCLYVILCNHSPQVFHPHVQALVPPVVACVGDPFYKITSEALLVTQQLVKVIRPLDQPSSFDATPYIKDVFTCTIKRLKAADIDQDVKERAISCMGQIICNLGDNLGSDLPNTLQIFLERLKNEITRLTTVKALTLIAGSPLKIDLRPVLGEGVPILASFLRKNQRALKLGTLSALDILIKNYSDSLTAAMIDAVLDELPPLISESDMHVSQMAISFLTTLAKVYPSSLSKISGSILNELIGLVRSPLLQGGALSAMLDFFQALVVTGTNNLGYMDLLRMLTGPVYSQSTALTHKQSYYSIAKCVAALTRACPKEGPAVVGQFIQDVKNSRSTDSIRLLALLSLGEVGHHIDLSGQLELKSVILEAFSSPSEEVKSAASYALGSISVGNLPEYLPFVLQEITSQPKRQYLLLHSLKEIISSASVVGLKPYVENIWALLLKHCECAEEGTRNVVAECLGKLTLIDPETLLPRLKGYLISGSSYARSSVVTAVKFTISDHPQPIDPLLKNCIGDFLKTLEDPDLNVRRVALVTFNSAAHNKPSLIRDLLDTVLPHLYNETKVRKELIREVEMGPFKHTVDDGLDIRKAAFECMYTLLDSCLDRLDIFEFLNHVEDGLKDHYDIKMLTFLMLVRLSTLCPSAVLQRLDRLVEPLRATCTTKVKANSVKQEFEKQDELKRSAMRAVAALLTIPEAEKSPLMSEFQSQISSNPELAAIFESIQKDSSSTNLESMDTS.

Residue A2 is modified to N-acetylalanine. HEAT repeat units lie at residues 2-39 (ASAS…KDSI), 44-81 (DSER…KVKE), 83-119 (QVET…ELPP), 131-165 (CKKI…LSRQ), 171-208 (NFHP…SCGN), 210-247 (VFVG…QAGH), 248-282 (RIGE…FESF), 289-366 (EVYP…TRHE), 370-407 (EFYK…QTRP), 424-467 (PLTM…VLPG), 471-510 (QHIP…NHSP), and 515-552 (PHVQ…VIRP). Position 55 is an N6-acetyllysine (K55). Positions 315–343 (DEDEDENAMDADGGDDDDQGSDDEYSDDG) are disordered. S335 is subject to Phosphoserine. Residue S558 is modified to Phosphoserine. 15 HEAT repeats span residues 563–602 (PYIK…NLGD), 606–643 (SDLP…LKID), 646–683 (PVLG…NYSD), 688–725 (AMID…VYPS), 729–768 (KISG…TGTN), 770–808 (LGYM…ALTR), 809–845 (ACPK…LGEV), 852–889 (SGQL…GNLP), 890–927 (EYLP…GLKP), 928–960 (YVEN…KLTL), 961–998 (IDPE…DHPQ), 1002–1039 (PLLK…NKPS), 1043–1097 (DLLD…DSCL), 1099–1133 (RLDI…LSTL), and 1140–1189 (QRLD…IPEA). K971 carries the N6-acetyllysine modification.

The protein belongs to the CAND family. In terms of assembly, interacts with TBP. Part of a complex that contains CUL1 and RBX1. Interacts with unneddylated cullins: interacts with CUL1, CUL2, CUL3, CUL4A, CUL4B and CUL5. Does not bind neddylated CUL1. Interaction with cullins is abolished in presence of COMMD1, which antagonizes with CAND1 for interacting with cullins. Interacts with ERCC6. Interacts with DCUN1D1, DCUN1D2, DCUN1D3, DCUN1D4 and DCUN1D5; these interactions are bridged by cullins and strongly inhibits the neddylation of cullins.

It localises to the cytoplasm. The protein resides in the nucleus. Key assembly factor of SCF (SKP1-CUL1-F-box protein) E3 ubiquitin ligase complexes that promotes the exchange of the substrate-recognition F-box subunit in SCF complexes, thereby playing a key role in the cellular repertoire of SCF complexes. Acts as a F-box protein exchange factor. The exchange activity of CAND1 is coupled with cycles of neddylation conjugation: in the deneddylated state, cullin-binding CAND1 binds CUL1-RBX1, increasing dissociation of the SCF complex and promoting exchange of the F-box protein. Probably plays a similar role in other cullin-RING E3 ubiquitin ligase complexes. The chain is Cullin-associated NEDD8-dissociated protein 1 (CAND1) from Pongo abelii (Sumatran orangutan).